A 495-amino-acid chain; its full sequence is Cytochrome P450 2E1 (495 aa).

298–303 (FAGTET) contributes to the substrate binding site. Cys437 serves as a coordination point for heme.

The protein belongs to the cytochrome P450 family. As to quaternary structure, interacts with chaperones HSP70 and HSP90; this interaction is required for initial targeting to mitochondria. Requires heme as cofactor.

The protein localises to the endoplasmic reticulum membrane. The protein resides in the microsome membrane. Its subcellular location is the mitochondrion inner membrane. The enzyme catalyses an organic molecule + reduced [NADPH--hemoprotein reductase] + O2 = an alcohol + oxidized [NADPH--hemoprotein reductase] + H2O + H(+). It carries out the reaction (5Z,8Z,11Z)-eicosatrienoate + reduced [NADPH--hemoprotein reductase] + O2 = 19-hydroxy-(5Z,8Z,11Z)-eicosatrienoate + oxidized [NADPH--hemoprotein reductase] + H2O + H(+). The catalysed reaction is (5Z,8Z,11Z,14Z,17Z)-eicosapentaenoate + reduced [NADPH--hemoprotein reductase] + O2 = 19-hydroxy-(5Z,8Z,11Z,14Z,17Z)-eicosapentaenoate + oxidized [NADPH--hemoprotein reductase] + H2O + H(+). It catalyses the reaction (4Z,7Z,10Z,13Z,16Z,19Z)-docosahexaenoate + reduced [NADPH--hemoprotein reductase] + O2 = 21-hydroxy-(4Z,7Z,10Z,13Z,16Z,19Z)-docosahexaenoate + oxidized [NADPH--hemoprotein reductase] + H2O + H(+). The enzyme catalyses dodecanoate + reduced [NADPH--hemoprotein reductase] + O2 = 11-hydroxydodecanoate + oxidized [NADPH--hemoprotein reductase] + H2O + H(+). It carries out the reaction tetradecanoate + reduced [NADPH--hemoprotein reductase] + O2 = 13-hydroxytetradecanoate + oxidized [NADPH--hemoprotein reductase] + H2O + H(+). The catalysed reaction is 4-nitrophenol + NADPH + O2 + H(+) = 4-nitrocatechol + NADP(+) + H2O. It participates in lipid metabolism; fatty acid metabolism. With respect to regulation, the omega-1 hydroxylase activity is stimulated by cytochrome b5. Its function is as follows. A cytochrome P450 monooxygenase involved in the metabolism of fatty acids. Mechanistically, uses molecular oxygen inserting one oxygen atom into a substrate, and reducing the second into a water molecule, with two electrons provided by NADPH via cytochrome P450 reductase (NADPH--hemoprotein reductase). Catalyzes the hydroxylation of carbon-hydrogen bonds. Hydroxylates fatty acids specifically at the omega-1 position displaying the highest catalytic activity for saturated fatty acids. May be involved in the oxidative metabolism of xenobiotics. The polypeptide is Cytochrome P450 2E1 (CYP2E1) (Sus scrofa (Pig)).